Here is a 595-residue protein sequence, read N- to C-terminus: NADH-quinone oxidoreductase subunit C/D (595 aa).

Residues 1-185 (MTDLTAQAAC…DPFELTKAKQ (185 aa)) form an NADH dehydrogenase I subunit C region. An NADH dehydrogenase I subunit D region spans residues 209 to 595 (DFMFLNLGPN…IDFVMSDVDR (387 aa)).

In the N-terminal section; belongs to the complex I 30 kDa subunit family. It in the C-terminal section; belongs to the complex I 49 kDa subunit family. As to quaternary structure, NDH-1 is composed of 13 different subunits. Subunits NuoB, CD, E, F, and G constitute the peripheral sector of the complex.

It localises to the cell inner membrane. The enzyme catalyses a quinone + NADH + 5 H(+)(in) = a quinol + NAD(+) + 4 H(+)(out). NDH-1 shuttles electrons from NADH, via FMN and iron-sulfur (Fe-S) centers, to quinones in the respiratory chain. The immediate electron acceptor for the enzyme in this species is believed to be ubiquinone. Couples the redox reaction to proton translocation (for every two electrons transferred, four hydrogen ions are translocated across the cytoplasmic membrane), and thus conserves the redox energy in a proton gradient. The chain is NADH-quinone oxidoreductase subunit C/D from Enterobacter sp. (strain 638).